The sequence spans 1002 residues: E3 ubiquitin-protein ligase BRE1B (1002 aa).

The disordered stretch occupies residues 1 to 32; sequence MSGLSNKRAAGDGGSGPPEKKLNREEKTTTTL. Residues 18-28 are compositionally biased toward basic and acidic residues; it reads PEKKLNREEKT. N6-acetyllysine is present on K20. Residue S42 is modified to Phosphoserine. Positions 55-91 form a coiled coil; it reads KNKKLAERLEQRQACEDELRERIEKLEKRQATDDATL. Positions 120–148 are disordered; that stretch reads SSGTEVPGCQEGLTRDVIPRTDPGTSDLR. Coiled-coil stretches lie at residues 190–378 and 438–526; these read KAAV…LRSL and LQKK…ASGS. N6-acetyllysine occurs at positions 356 and 518. Disordered regions lie at residues 520–562 and 579–652; these read RAQA…PDSK and KKEE…ESEL. Residues K579 and K580 each participate in a glycyl lysine isopeptide (Lys-Gly) (interchain with G-Cter in SUMO2) cross-link. Residues S585 and S586 each carry the phosphoserine modification. Composition is skewed to basic and acidic residues over residues 603–620 and 634–652; these read RGREPEARPKRELREREG and RADREKAKAEEARRKESEL. Residues 628–947 are a coiled coil; sequence AASTLSRADR…EEIKEYKARL (320 aa). The RING-type zinc finger occupies 949–988; that stretch reads CPCCNTRKKDAVLTKCFHVFCFECVRGRYEARQRKCPKCN.

Belongs to the BRE1 family. Component of the RNF20/40 complex (also known as BRE1 complex) probably composed of 2 copies of RNF20/BRE1A and 2 copies of RNF40/BRE1B. Interacts with UBE2E1/UBCH6. Interacts with RB1 and WAC. May interact with STX1A. Ubiquitously expressed. Expressed in brain, testis, heart, liver and kidney. Weakly expressed in lung, spleen and skeletal muscle (at protein level).

Its subcellular location is the nucleus. The catalysed reaction is S-ubiquitinyl-[E2 ubiquitin-conjugating enzyme]-L-cysteine + [acceptor protein]-L-lysine = [E2 ubiquitin-conjugating enzyme]-L-cysteine + N(6)-ubiquitinyl-[acceptor protein]-L-lysine.. Its pathway is protein modification; protein ubiquitination. Its function is as follows. Component of the RNF20/40 E3 ubiquitin-protein ligase complex that mediates monoubiquitination of 'Lys-120' of histone H2B (H2BK120ub1). H2BK120ub1 gives a specific tag for epigenetic transcriptional activation and is also prerequisite for histone H3 'Lys-4' and 'Lys-79' methylation (H3K4me and H3K79me, respectively). It thereby plays a central role in histone code and gene regulation. The RNF20/40 complex forms a H2B ubiquitin ligase complex in cooperation with the E2 enzyme UBE2A or UBE2B; reports about the cooperation with UBE2E1/UBCH are contradictory. Required for transcriptional activation of Hox genes. This chain is E3 ubiquitin-protein ligase BRE1B (Rnf40), found in Rattus norvegicus (Rat).